The chain runs to 85 residues: Contulakin-Lt2 (85 aa).

An N-terminal signal peptide occupies residues 1-22 (MQMAYWVMVMMMVGITAPLSEG). The propeptide occupies 23–61 (RKLNDAIRGLVPNDLTPQLLQSLVSRRHRVFHLDNTYLK). Cysteines 65 and 70 form a disulfide. Positions 76–85 (RRRDLKKRNK) are excised as a propeptide.

The protein belongs to the conotoxin C superfamily. In terms of tissue distribution, expressed by the venom duct.

It is found in the secreted. Its function is as follows. Acts as an agonist of neurotensin receptors. It binds to human neurotensin type 1 receptor (NTSR1), rat neurotensin types 1 and 2 receptors (NTSR1/NTSR2) and mouse neurotensin type 3 receptor (SORT1). The protein is Contulakin-Lt2 of Conus litteratus (Lettered cone).